The chain runs to 359 residues: MIESKTYAVLGLGNGGHAFAAYLALKGQSVLAWDIDAQRIKEIQDRGAIIAEGPGLAGTAHPDLLTSDIGLAVKDADVILIVVPAIHHASIAANIASYISEGQLIILNPGATGGALEFRKILRENGAPEVTIGETSSMLFTCRSERPGQVTVNAIKGAMDFACLPAAKAGWALEQIGSVLPQYVAVENVLHTSLTNVNAVMHPLPTLLNAARCESGTPFQYYLEGITPSVGSLAEKVDAERIAIAKAFDLNVPSVCEWYKESYGQSPATIYEAVQGNPAYRGIAGPINLNTRYFFEDVSTGLVPLSELGRAVNVPTPLIDAVLDLISSLIDTDFRKEGRTLEKLGLSGLTAAGIRSAVE.

The protein belongs to the lysopine/nopaline/octopine/opine/vitopine dehydrogenases family. In terms of assembly, homodimer.

The catalysed reaction is (2S)-2-[(R)-1-carboxyethylamino]pentanoate + NAD(+) + H2O = L-2-aminopentanoate + pyruvate + NADH + H(+). Functionally, in the forward direction also acts on secondary amine dicarboxylates such as N-(1-carboxyethyl)methionine and N-(1-carboxyethyl)phenylalanine. In the reverse direction, the enzyme also acts on neutral amino acids as an amino donor. They include L-amino acids such as 2-aminopentanoic acid, 2-aminobutyric acid, 2-aminohexanoic acid, 3-chloroalanine, O-acetylserine, methionine, isoleucine, valine, phenylalanine, leucine and alanine. This Arthrobacter sp. (strain 1C) protein is Opine dehydrogenase (odh).